The primary structure comprises 604 residues: Putative ankyrin repeat protein L56 (604 aa).

13 ANK repeats span residues isoleucine 77–valine 106, phenylalanine 135–glycine 164, leucine 166–asparagine 189, threonine 190–arginine 219, asparagine 221–isoleucine 247, aspartate 248–tyrosine 277, lysine 314–valine 341, aspartate 342–aspartate 371, glutamate 380–tyrosine 410, tyrosine 445–proline 474, isoleucine 475–isoleucine 504, asparagine 505–threonine 534, and aspartate 535–asparagine 565.

In Acanthamoeba polyphaga (Amoeba), this protein is Putative ankyrin repeat protein L56.